A 378-amino-acid polypeptide reads, in one-letter code: Chaperone protein DnaJ (378 aa).

One can recognise a J domain in the interval 5–70 (DYYEVLGVAK…QKRAAYDQYG (66 aa)). The segment at 138-216 (GYDTQIRVPS…CHGSGKVKET (79 aa)) adopts a CR-type zinc-finger fold. The Zn(2+) site is built by cysteine 151, cysteine 154, cysteine 168, cysteine 171, cysteine 190, cysteine 193, cysteine 204, and cysteine 207. 4 CXXCXGXG motif repeats span residues 151 to 158 (CEVCHGSG), 168 to 175 (CPTCHGQG), 190 to 197 (CPKCHGTG), and 204 to 211 (CVHCHGSG).

This sequence belongs to the DnaJ family. Homodimer. It depends on Zn(2+) as a cofactor.

The protein resides in the cytoplasm. Participates actively in the response to hyperosmotic and heat shock by preventing the aggregation of stress-denatured proteins and by disaggregating proteins, also in an autonomous, DnaK-independent fashion. Unfolded proteins bind initially to DnaJ; upon interaction with the DnaJ-bound protein, DnaK hydrolyzes its bound ATP, resulting in the formation of a stable complex. GrpE releases ADP from DnaK; ATP binding to DnaK triggers the release of the substrate protein, thus completing the reaction cycle. Several rounds of ATP-dependent interactions between DnaJ, DnaK and GrpE are required for fully efficient folding. Also involved, together with DnaK and GrpE, in the DNA replication of plasmids through activation of initiation proteins. This Burkholderia ambifaria (strain MC40-6) protein is Chaperone protein DnaJ.